A 355-amino-acid chain; its full sequence is Serum paraoxonase/arylesterase 1 (355 aa).

Cys-42 and Cys-353 form a disulfide bridge. Residues Glu-53 and Asp-54 each coordinate Ca(2+). His-115 functions as the Proton acceptor in the catalytic mechanism. The Ca(2+) site is built by Ile-117, Asn-168, Asp-169, and Asn-224. A glycan (N-linked (GlcNAc...) asparagine) is linked at Asn-253. Asp-269 and Asn-270 together coordinate Ca(2+). Asn-270 and Asn-324 each carry an N-linked (GlcNAc...) asparagine glycan.

Belongs to the paraoxonase family. In terms of assembly, homodimer. Heterooligomer with phosphate-binding protein (HPBP). Interacts with CLU. It depends on Ca(2+) as a cofactor. Glycosylated. In terms of processing, the signal sequence is not cleaved. Post-translationally, present in two forms, form B contains a disulfide bond, form A does not. Plasma, associated with HDL (at protein level). Expressed in liver, but not in heart, brain, placenta, lung, skeletal muscle, kidney or pancreas.

The protein resides in the secreted. The protein localises to the extracellular space. The catalysed reaction is a phenyl acetate + H2O = a phenol + acetate + H(+). It carries out the reaction An aryl dialkyl phosphate + H2O = dialkyl phosphate + an aryl alcohol.. It catalyses the reaction an N-acyl-L-homoserine lactone + H2O = an N-acyl-L-homoserine + H(+). Its function is as follows. Hydrolyzes the toxic metabolites of a variety of organophosphorus insecticides. Capable of hydrolyzing a broad spectrum of organophosphate substrates and lactones, and a number of aromatic carboxylic acid esters. Mediates an enzymatic protection of low density lipoproteins against oxidative modification and the consequent series of events leading to atheroma formation. This is Serum paraoxonase/arylesterase 1 (PON1) from Homo sapiens (Human).